We begin with the raw amino-acid sequence, 183 residues long: Lipid droplet coating protein Cap20 (183 aa).

The protein belongs to the perilipin family.

The protein resides in the lipid droplet. In terms of biological role, lipid droplet coating protein that regulates lipid metabolism, appressorial turgor pressure, and virulence. Appressorial turgor pressure is important for the mechanical penetration of the host cuticle during infection. In Colletotrichum gloeosporioides (Anthracnose fungus), this protein is Lipid droplet coating protein Cap20 (Cap20).